The sequence spans 290 residues: O-methyltransferase agiB (290 aa).

D155 is an S-adenosyl-L-methionine binding site. H194 acts as the Proton acceptor in catalysis.

It belongs to the class I-like SAM-binding methyltransferase superfamily. Cation-independent O-methyltransferase family.

It participates in secondary metabolite biosynthesis. O-methyltransferase; part of the gene cluster that mediates the biosynthesis of the aspergillicins A and F, 2 cryptic cyclic hexa-depsipeptides. The hexamodular NRPS agiA catalyzes the condensation of the six amino acid residues including N-Me-L-O-Me-tyrosine, L-proline 1, L-proline 2, D-isoleucine, O-acetyl-threonine, and L-isoleucine. The starting condensation domain (C1) of agiA probably loads acetyl-CoA which is condensed on the N-terminus of threonine by the first module to yield O-acetyl-threonine. The second module then loads L-isoleucine. The epimerase (E) domain on module 2 is probably involved in the formation of the D-isoleucine moiety. Modules 3 and 4 further load 2 successive L-prolines. Module 5 is then involved in the condensation of O-Me-L-tyrosine produced by the O-methyltransferase agiB and the N-methyl transferase (NMeT) domain on module 5 probably catalyzes the N-methylation to yield the N-Me-L-O-Me-tyrosine moiety. The A domain of module 5 loads preferentially O-Me-L-tyrosine, but it can also accept L-phenylalanine, which leads to the production of aspergillicin G. Module 6 then loads the last residue, L-isoleucine. The C-terminal thiolesterase (TE) domain probably cyclizes the peptide using the hydroxy group from threonine to form the cyclic depsipeptide. The protein is O-methyltransferase agiB of Aspergillus flavus (strain ATCC 200026 / FGSC A1120 / IAM 13836 / NRRL 3357 / JCM 12722 / SRRC 167).